The primary structure comprises 101 residues: ATP-dependent Clp protease adapter protein ClpS 1 (101 aa).

This sequence belongs to the ClpS family. Binds to the N-terminal domain of the chaperone ClpA.

Its function is as follows. Involved in the modulation of the specificity of the ClpAP-mediated ATP-dependent protein degradation. The chain is ATP-dependent Clp protease adapter protein ClpS 1 from Bradyrhizobium diazoefficiens (strain JCM 10833 / BCRC 13528 / IAM 13628 / NBRC 14792 / USDA 110).